A 293-amino-acid chain; its full sequence is Extracellular metalloprotease PODANS_2_14170 (293 aa).

The signal sequence occupies residues 1–18 (MRFSLALAAAGLAQTAFA). N60 carries an N-linked (GlcNAc...) asparagine glycan. Zn(2+) is bound at residue H206. Residue E207 is part of the active site. Position 210 (H210) interacts with Zn(2+). A disulfide bond links C242 and C269.

Belongs to the peptidase M43B family.

The protein localises to the secreted. Secreted metalloproteinase that allows assimilation of proteinaceous substrates. In Podospora anserina (strain S / ATCC MYA-4624 / DSM 980 / FGSC 10383) (Pleurage anserina), this protein is Extracellular metalloprotease PODANS_2_14170.